The chain runs to 493 residues: Glycerol kinase (493 aa).

Threonine 11 lines the ADP pocket. Residues threonine 11, threonine 12, and serine 13 each contribute to the ATP site. Threonine 11 contributes to the sn-glycerol 3-phosphate binding site. Position 15 (arginine 15) interacts with ADP. Sn-glycerol 3-phosphate contacts are provided by arginine 80, glutamate 81, tyrosine 132, and aspartate 241. Positions 80, 81, 132, 241, and 242 each coordinate glycerol. ADP contacts are provided by threonine 263 and glycine 306. Threonine 263, glycine 306, glutamine 310, and glycine 408 together coordinate ATP. Glycine 408 is an ADP binding site.

It belongs to the FGGY kinase family.

It catalyses the reaction glycerol + ATP = sn-glycerol 3-phosphate + ADP + H(+). It functions in the pathway polyol metabolism; glycerol degradation via glycerol kinase pathway; sn-glycerol 3-phosphate from glycerol: step 1/1. Its activity is regulated as follows. Inhibited by fructose 1,6-bisphosphate (FBP). Its function is as follows. Key enzyme in the regulation of glycerol uptake and metabolism. Catalyzes the phosphorylation of glycerol to yield sn-glycerol 3-phosphate. The polypeptide is Glycerol kinase (Cereibacter sphaeroides (strain ATCC 17025 / ATH 2.4.3) (Rhodobacter sphaeroides)).